The sequence spans 343 residues: 4-hydroxy-2-oxovalerate aldolase (343 aa).

Residues 5–256 form the Pyruvate carboxyltransferase domain; the sequence is ILLCDPTLRD…ETGIDLYKIL (252 aa). 13 to 14 lines the substrate pocket; that stretch reads RD. Aspartate 14 contacts Mn(2+). Histidine 17 acts as the Proton acceptor in catalysis. Substrate is bound by residues serine 168 and histidine 195. Mn(2+)-binding residues include histidine 195 and histidine 197.

It belongs to the 4-hydroxy-2-oxovalerate aldolase family. As to quaternary structure, interacts with MhpF.

The enzyme catalyses (S)-4-hydroxy-2-oxopentanoate = acetaldehyde + pyruvate. The protein operates within aromatic compound metabolism; 3-phenylpropanoate degradation. In terms of biological role, catalyzes the retro-aldol cleavage of 4-hydroxy-2-oxopentanoate to pyruvate and acetaldehyde. Is involved in the meta-cleavage pathway for the degradation of aromatic compounds. The protein is 4-hydroxy-2-oxovalerate aldolase of Pectobacterium atrosepticum (strain SCRI 1043 / ATCC BAA-672) (Erwinia carotovora subsp. atroseptica).